Consider the following 385-residue polypeptide: Deoxyguanosinetriphosphate triphosphohydrolase-like protein (385 aa).

In terms of domain architecture, HD spans 62–197; it reads RLTHSLEVAQ…VSLADDIAYS (136 aa).

This sequence belongs to the dGTPase family. Type 2 subfamily.

The protein is Deoxyguanosinetriphosphate triphosphohydrolase-like protein of Neorickettsia sennetsu (strain ATCC VR-367 / Miyayama) (Ehrlichia sennetsu).